A 229-amino-acid chain; its full sequence is Peptidase E (229 aa).

Catalysis depends on charge relay system residues Ser120, Asp135, and His157.

This sequence belongs to the peptidase S51 family.

It is found in the cytoplasm. The catalysed reaction is Dipeptidase E catalyzes the hydrolysis of dipeptides Asp-|-Xaa. It does not act on peptides with N-terminal Glu, Asn or Gln, nor does it cleave isoaspartyl peptides.. Functionally, hydrolyzes dipeptides containing N-terminal aspartate residues. May play a role in allowing the cell to use peptide aspartate to spare carbon otherwise required for the synthesis of the aspartate family of amino acids. In Citrobacter koseri (strain ATCC BAA-895 / CDC 4225-83 / SGSC4696), this protein is Peptidase E.